Consider the following 463-residue polypeptide: Glutamate--tRNA ligase 1 (463 aa).

The short motif at 10 to 20 (PSPTGYLHIGG) is the 'HIGH' region element. Positions 238–242 (KLSKR) match the 'KMSKS' region motif. An ATP-binding site is contributed by Lys-241.

Belongs to the class-I aminoacyl-tRNA synthetase family. Glutamate--tRNA ligase type 1 subfamily. In terms of assembly, monomer.

The protein localises to the cytoplasm. It catalyses the reaction tRNA(Glu) + L-glutamate + ATP = L-glutamyl-tRNA(Glu) + AMP + diphosphate. Functionally, catalyzes the attachment of glutamate to tRNA(Glu) in a two-step reaction: glutamate is first activated by ATP to form Glu-AMP and then transferred to the acceptor end of tRNA(Glu). The polypeptide is Glutamate--tRNA ligase 1 (Helicobacter pylori (strain HPAG1)).